Here is a 90-residue protein sequence, read N- to C-terminus: Acylphosphatase (90 aa).

An Acylphosphatase-like domain is found at 3 to 90 (NYKIIVFGTV…KTYNDFSVTY (88 aa)). Residues arginine 18 and asparagine 36 contribute to the active site.

It belongs to the acylphosphatase family.

It catalyses the reaction an acyl phosphate + H2O = a carboxylate + phosphate + H(+). This chain is Acylphosphatase (acyP), found in Ligilactobacillus salivarius (strain UCC118) (Lactobacillus salivarius).